The chain runs to 1495 residues: DNA-directed RNA polymerase subunit 1 (1495 aa).

It belongs to the RNA polymerase beta' chain family.

The protein resides in the virion. The enzyme catalyses RNA(n) + a ribonucleoside 5'-triphosphate = RNA(n+1) + diphosphate. In terms of biological role, DNA-dependent RNA polymerase catalyzes the transcription of DNA into RNA using the four ribonucleoside triphosphates as substrates. The polypeptide is DNA-directed RNA polymerase subunit 1 (RPO1) (Acanthamoeba polyphaga (Amoeba)).